The chain runs to 785 residues: DNA ligase (785 aa).

Residues 32–36, 81–82, and Glu121 contribute to the NAD(+) site; these read DAEYD and SL. The active-site N6-AMP-lysine intermediate is Lys123. Residues Arg144, Glu181, Lys297, and Lys321 each coordinate NAD(+). Residues Cys415, Cys418, Cys445, and Cys451 each contribute to the Zn(2+) site. In terms of domain architecture, BRCT spans 702–785; it reads VEGLPLAGET…AFLKGHGISA (84 aa).

The protein belongs to the NAD-dependent DNA ligase family. LigA subfamily. Mg(2+) is required as a cofactor. Requires Mn(2+) as cofactor.

It carries out the reaction NAD(+) + (deoxyribonucleotide)n-3'-hydroxyl + 5'-phospho-(deoxyribonucleotide)m = (deoxyribonucleotide)n+m + AMP + beta-nicotinamide D-nucleotide.. Functionally, DNA ligase that catalyzes the formation of phosphodiester linkages between 5'-phosphoryl and 3'-hydroxyl groups in double-stranded DNA using NAD as a coenzyme and as the energy source for the reaction. It is essential for DNA replication and repair of damaged DNA. This chain is DNA ligase, found in Pseudomonas fluorescens (strain Pf0-1).